We begin with the raw amino-acid sequence, 877 residues long: Probable sulfate permease C3H7.02 (877 aa).

13 helical membrane-spanning segments follow: residues 133–153, 161–181, 186–206, 221–241, 243–263, 292–312, 329–349, 384–404, 424–444, 461–481, 484–504, 518–538, and 543–563; these read WLVYDFIAGITVGCVVVPQGM, LPAQYGLYSSFVGVAIYCIFA, VSIGPVAVMSLVTSKVIANVQ, LALLAGAITCGLGLLRLGFII, FIPVPAVAGFTTGSALNIMAG, LPHTKVDAAFGLVSLFILYLV, VFFLTNVLRSAVIIIVGTAIS, LCADLASELPVSVIVLLLEHI, LIAMGATNLIGVFFHAYPATG, LGGIFTAGVVVLALYCLTGAF, IPNAVLSAVIIHSVFDLIIPW, ALIFICAVFVSVFSSIENGIY, and LSAALLLFRIAKPSGSFLGIL. An STAS domain is found at 594–747; that stretch reads NLTVRDPPAG…SRSIEVGSAA (154 aa). Disordered regions lie at residues 643–663 and 793–821; these read KASDRPWNDPAPRKKKNAPEV and ADSDTISVSDDKDKKVEGHRPSQDPTFSH. Basic and acidic residues predominate over residues 801–821; sequence SDDKDKKVEGHRPSQDPTFSH.

This sequence belongs to the SLC26A/SulP transporter (TC 2.A.53) family.

The protein localises to the membrane. High affinity uptake of sulfate into the cell. This is Probable sulfate permease C3H7.02 from Schizosaccharomyces pombe (strain 972 / ATCC 24843) (Fission yeast).